Reading from the N-terminus, the 557-residue chain is Formate--tetrahydrofolate ligase (557 aa).

Residue 65–72 coordinates ATP; sequence TPAGEGKT.

This sequence belongs to the formate--tetrahydrofolate ligase family.

It catalyses the reaction (6S)-5,6,7,8-tetrahydrofolate + formate + ATP = (6R)-10-formyltetrahydrofolate + ADP + phosphate. It functions in the pathway one-carbon metabolism; tetrahydrofolate interconversion. This chain is Formate--tetrahydrofolate ligase, found in Zymomonas mobilis subsp. mobilis (strain ATCC 31821 / ZM4 / CP4).